We begin with the raw amino-acid sequence, 281 residues long: 4-hydroxy-3-methylbut-2-enyl diphosphate reductase (281 aa).

Cys-12 lines the [4Fe-4S] cluster pocket. Residues His-41 and His-74 each contribute to the (2E)-4-hydroxy-3-methylbut-2-enyl diphosphate site. Dimethylallyl diphosphate is bound by residues His-41 and His-74. His-41 and His-74 together coordinate isopentenyl diphosphate. Residue Cys-96 coordinates [4Fe-4S] cluster. His-124 lines the (2E)-4-hydroxy-3-methylbut-2-enyl diphosphate pocket. His-124 is a binding site for dimethylallyl diphosphate. Position 124 (His-124) interacts with isopentenyl diphosphate. Glu-126 functions as the Proton donor in the catalytic mechanism. Thr-164 provides a ligand contact to (2E)-4-hydroxy-3-methylbut-2-enyl diphosphate. Cys-193 serves as a coordination point for [4Fe-4S] cluster. Residues Ser-221, Asn-223, and Ser-265 each coordinate (2E)-4-hydroxy-3-methylbut-2-enyl diphosphate. Ser-221, Asn-223, and Ser-265 together coordinate dimethylallyl diphosphate. Positions 221, 223, and 265 each coordinate isopentenyl diphosphate.

This sequence belongs to the IspH family. It depends on [4Fe-4S] cluster as a cofactor.

It catalyses the reaction isopentenyl diphosphate + 2 oxidized [2Fe-2S]-[ferredoxin] + H2O = (2E)-4-hydroxy-3-methylbut-2-enyl diphosphate + 2 reduced [2Fe-2S]-[ferredoxin] + 2 H(+). The catalysed reaction is dimethylallyl diphosphate + 2 oxidized [2Fe-2S]-[ferredoxin] + H2O = (2E)-4-hydroxy-3-methylbut-2-enyl diphosphate + 2 reduced [2Fe-2S]-[ferredoxin] + 2 H(+). It functions in the pathway isoprenoid biosynthesis; dimethylallyl diphosphate biosynthesis; dimethylallyl diphosphate from (2E)-4-hydroxy-3-methylbutenyl diphosphate: step 1/1. Its pathway is isoprenoid biosynthesis; isopentenyl diphosphate biosynthesis via DXP pathway; isopentenyl diphosphate from 1-deoxy-D-xylulose 5-phosphate: step 6/6. Its function is as follows. Catalyzes the conversion of 1-hydroxy-2-methyl-2-(E)-butenyl 4-diphosphate (HMBPP) into a mixture of isopentenyl diphosphate (IPP) and dimethylallyl diphosphate (DMAPP). Acts in the terminal step of the DOXP/MEP pathway for isoprenoid precursor biosynthesis. In Nitratidesulfovibrio vulgaris (strain DSM 19637 / Miyazaki F) (Desulfovibrio vulgaris), this protein is 4-hydroxy-3-methylbut-2-enyl diphosphate reductase.